Consider the following 487-residue polypeptide: L-tartrate/succinate antiporter (487 aa).

Transmembrane regions (helical) follow at residues tyrosine 10–glutamate 30, threonine 33–proline 53, glycine 54–phenylalanine 74, tryptophan 93–glycine 113, threonine 137–serine 157, isoleucine 189–leucine 209, phenylalanine 236–valine 256, leucine 292–valine 312, glycine 313–serine 333, valine 340–isoleucine 360, serine 370–leucine 390, phenylalanine 393–leucine 413, isoleucine 418–threonine 438, and isoleucine 465–valine 485.

Belongs to the SLC13A/DASS transporter (TC 2.A.47) family. DIT1 subfamily.

The protein localises to the cell inner membrane. The enzyme catalyses (2R,3R)-tartrate(out) + succinate(in) = (2R,3R)-tartrate(in) + succinate(out). Catalyzes the uptake of tartrate in exchange for intracellular succinate. Essential for anaerobic L-tartrate fermentation. This Shigella sonnei (strain Ss046) protein is L-tartrate/succinate antiporter (ttdT).